A 481-amino-acid polypeptide reads, in one-letter code: Glutamyl-tRNA(Gln) amidotransferase subunit A (481 aa).

Residues K76 and S151 each act as charge relay system in the active site. S175 serves as the catalytic Acyl-ester intermediate.

This sequence belongs to the amidase family. GatA subfamily. In terms of assembly, heterotrimer of A, B and C subunits.

It catalyses the reaction L-glutamyl-tRNA(Gln) + L-glutamine + ATP + H2O = L-glutaminyl-tRNA(Gln) + L-glutamate + ADP + phosphate + H(+). Allows the formation of correctly charged Gln-tRNA(Gln) through the transamidation of misacylated Glu-tRNA(Gln) in organisms which lack glutaminyl-tRNA synthetase. The reaction takes place in the presence of glutamine and ATP through an activated gamma-phospho-Glu-tRNA(Gln). In Chlorobaculum tepidum (strain ATCC 49652 / DSM 12025 / NBRC 103806 / TLS) (Chlorobium tepidum), this protein is Glutamyl-tRNA(Gln) amidotransferase subunit A.